Reading from the N-terminus, the 180-residue chain is Large ribosomal subunit protein uL6 (180 aa).

This sequence belongs to the universal ribosomal protein uL6 family. Part of the 50S ribosomal subunit.

Functionally, this protein binds to the 23S rRNA, and is important in its secondary structure. It is located near the subunit interface in the base of the L7/L12 stalk, and near the tRNA binding site of the peptidyltransferase center. The sequence is that of Large ribosomal subunit protein uL6 from Salinispora arenicola (strain CNS-205).